The primary structure comprises 468 residues: ATP synthase subunit beta (468 aa).

155 to 162 (GGAGVGKT) is an ATP binding site.

This sequence belongs to the ATPase alpha/beta chains family. As to quaternary structure, F-type ATPases have 2 components, CF(1) - the catalytic core - and CF(0) - the membrane proton channel. CF(1) has five subunits: alpha(3), beta(3), gamma(1), delta(1), epsilon(1). CF(0) has three main subunits: a(1), b(2) and c(9-12). The alpha and beta chains form an alternating ring which encloses part of the gamma chain. CF(1) is attached to CF(0) by a central stalk formed by the gamma and epsilon chains, while a peripheral stalk is formed by the delta and b chains.

It is found in the cell membrane. It catalyses the reaction ATP + H2O + 4 H(+)(in) = ADP + phosphate + 5 H(+)(out). In terms of biological role, produces ATP from ADP in the presence of a proton gradient across the membrane. The catalytic sites are hosted primarily by the beta subunits. This is ATP synthase subunit beta from Streptococcus suis (strain 98HAH33).